The following is a 207-amino-acid chain: Phycobilisome maturation protein (207 aa).

This sequence belongs to the CpcE/RpcE/PecE family. As to quaternary structure, cpcE and CpcF associate to form a lyase.

Required for the chromophorylation of the cpcA gene product. The protein is Phycobilisome maturation protein (cpcF) of Synechococcus elongatus (strain ATCC 33912 / PCC 7942 / FACHB-805) (Anacystis nidulans R2).